Consider the following 47-residue polypeptide: Light-harvesting protein B800/850/890 alpha-2 chain (47 aa).

The Cytoplasmic segment spans residues Met1 to Arg12. Residues Thr13–Leu33 traverse the membrane as a helical segment. An a bacteriochlorophyll-binding site is contributed by His29. The Periplasmic segment spans residues Ser34–Gly47.

The protein belongs to the antenna complex alpha subunit family. As to quaternary structure, the core complex is formed by different alpha and beta chains, binding bacteriochlorophyll molecules, and arranged most probably in tetrameric structures disposed around the reaction center. The non-pigmented gamma chains may constitute additional components.

It localises to the cell inner membrane. Functionally, antenna complexes are light-harvesting systems, which transfer the excitation energy to the reaction centers. The sequence is that of Light-harvesting protein B800/850/890 alpha-2 chain from Halorhodospira halophila (strain DSM 244 / SL1) (Ectothiorhodospira halophila (strain DSM 244 / SL1)).